A 471-amino-acid polypeptide reads, in one-letter code: Glutamate--tRNA ligase (471 aa).

The 'HIGH' region motif lies at 9 to 19 (PSPTGYLHVGG). C98, C100, C125, and D127 together coordinate Zn(2+). Residues 237 to 241 (KLSKR) carry the 'KMSKS' region motif. K240 lines the ATP pocket.

The protein belongs to the class-I aminoacyl-tRNA synthetase family. Glutamate--tRNA ligase type 1 subfamily. In terms of assembly, monomer. Zn(2+) serves as cofactor.

It localises to the cytoplasm. It catalyses the reaction tRNA(Glu) + L-glutamate + ATP = L-glutamyl-tRNA(Glu) + AMP + diphosphate. Catalyzes the attachment of glutamate to tRNA(Glu) in a two-step reaction: glutamate is first activated by ATP to form Glu-AMP and then transferred to the acceptor end of tRNA(Glu). The polypeptide is Glutamate--tRNA ligase (Yersinia enterocolitica serotype O:8 / biotype 1B (strain NCTC 13174 / 8081)).